The sequence spans 306 residues: tRNA-cytidine(32) 2-sulfurtransferase (306 aa).

The PP-loop motif motif lies at 44-49; it reads SGGKDS. [4Fe-4S] cluster-binding residues include cysteine 119, cysteine 122, and cysteine 210.

This sequence belongs to the TtcA family. Homodimer. Requires Mg(2+) as cofactor. [4Fe-4S] cluster is required as a cofactor.

It localises to the cytoplasm. It catalyses the reaction cytidine(32) in tRNA + S-sulfanyl-L-cysteinyl-[cysteine desulfurase] + AH2 + ATP = 2-thiocytidine(32) in tRNA + L-cysteinyl-[cysteine desulfurase] + A + AMP + diphosphate + H(+). It functions in the pathway tRNA modification. In terms of biological role, catalyzes the ATP-dependent 2-thiolation of cytidine in position 32 of tRNA, to form 2-thiocytidine (s(2)C32). The sulfur atoms are provided by the cysteine/cysteine desulfurase (IscS) system. This Photorhabdus laumondii subsp. laumondii (strain DSM 15139 / CIP 105565 / TT01) (Photorhabdus luminescens subsp. laumondii) protein is tRNA-cytidine(32) 2-sulfurtransferase.